The chain runs to 141 residues: ATP synthase F(0) complex subunit C3, mitochondrial (141 aa).

A mitochondrion-targeting transit peptide spans Met-1–Arg-66. Residues Val-82 to Tyr-102 traverse the membrane as a helical segment. Position 109 is an N6,N6,N6-trimethyllysine (Lys-109). Residues Ile-117 to Ile-137 traverse the membrane as a helical segment.

Belongs to the ATPase C chain family. F-type ATPases have 2 components, CF(1) - the catalytic core - and CF(0) - the membrane proton channel. CF(1) has five subunits: alpha(3), beta(3), gamma(1), delta(1), epsilon(1). CF(0) has three main subunits: a, b and c. Interacts with TMEM70 and TMEM242. Post-translationally, trimethylated by ATPSCKMT at Lys-109. Methylation is required for proper incorporation of the C subunit into the ATP synthase complex and mitochondrial respiration.

The protein resides in the mitochondrion membrane. Its function is as follows. Mitochondrial membrane ATP synthase (F(1)F(0) ATP synthase or Complex V) produces ATP from ADP in the presence of a proton gradient across the membrane which is generated by electron transport complexes of the respiratory chain. F-type ATPases consist of two structural domains, F(1) - containing the extramembraneous catalytic core and F(0) - containing the membrane proton channel, linked together by a central stalk and a peripheral stalk. During catalysis, ATP synthesis in the catalytic domain of F(1) is coupled via a rotary mechanism of the central stalk subunits to proton translocation. Part of the complex F(0) domain. A homomeric c-ring of probably 10 subunits is part of the complex rotary element. This is ATP synthase F(0) complex subunit C3, mitochondrial from Mus musculus (Mouse).